Consider the following 997-residue polypeptide: Burkholderia TALE-like protein 2 (997 aa).

The stretch at 19–50 is one Cryptic repeat -1 repeat; that stretch reads LSPLERIKIEKHYGGGATLAFISNQHDELAQV. The Cryptic repeat 0 repeat unit spans residues 51–83; that stretch reads LSRADILKIASYDCAAQALQAVLDCGPMLGKRG. Core repeat repeat units follow at residues 84–116, 117–147, 148–180, 181–213, 214–244, 245–277, 278–310, 311–343, 344–376, 377–409, 410–442, 443–475, 476–508, 509–539, 540–572, 573–605, 606–638, 639–671, 672–704, 705–737, 738–770, 771–803, 804–836, 837–869, 870–902, 903–935, and 936–967; these read FSRA…GKRG, FSQV…GERG, FSRG…RERG, FNQA…GKRG, FSRV…RKRG, FHPT…RERG, FSQA…CERG, FSQP…RERG, FSQA…HERG, FSQA…RERG, VRQA…RERG, FNQA…DKRG, FNPT…RERG, FNQA…RERG, FSQP…HKRG, FGQP…RERG, FSQS…RESD, FRQA…RQRG, FNRA…DERG, FNLT…QQRG, FNLT…RQRG, FNLI…RQRD, and LSLI…MQAG. Residues 84-967 are buD domain; that stretch reads FSRADIVRIA…KYGPVLMQAG (884 aa). ANK repeat units lie at residues 772 to 801, 805 to 834, 838 to 867, and 871 to 900; these read RQAD…RLRQ, NRAS…TLDE, NLTN…TLQQ, and NLTD…TLRQ. Residues 968–997 form a Cryptic repeat +1 repeat; the sequence is RSNEEIVHVAARRGGAGRIRKMVALLLERQ.

The protein belongs to the transcription activator-like effector (TALE) family. Bat subfamily.

In terms of biological role, binds to DNA in a sequence-specific manner. The polypeptide is Burkholderia TALE-like protein 2 (Mycetohabitans rhizoxinica (strain DSM 19002 / CIP 109453 / HKI 454) (Paraburkholderia rhizoxinica)).